A 566-amino-acid chain; its full sequence is Membrane protein insertase YidC (566 aa).

The next 5 membrane-spanning stretches (helical) occupy residues 3-23 (IKRI…FNAW), 346-366 (GWLW…HAVV), 369-389 (WGWS…WFSA), 436-456 (GGCL…YVII), and 509-529 (MWIL…GLVL).

This sequence belongs to the OXA1/ALB3/YidC family. Type 1 subfamily. As to quaternary structure, interacts with the Sec translocase complex via SecD. Specifically interacts with transmembrane segments of nascent integral membrane proteins during membrane integration.

It localises to the cell inner membrane. In terms of biological role, required for the insertion and/or proper folding and/or complex formation of integral membrane proteins into the membrane. Involved in integration of membrane proteins that insert both dependently and independently of the Sec translocase complex, as well as at least some lipoproteins. Aids folding of multispanning membrane proteins. The sequence is that of Membrane protein insertase YidC from Coxiella burnetii (strain CbuK_Q154) (Coxiella burnetii (strain Q154)).